Reading from the N-terminus, the 390-residue chain is Purine permease 21 (390 aa).

The segment at 12–34 (QQGKEPIPTDQDERSSVSGSQTK) is disordered. The next 10 helical transmembrane spans lie at 44 to 64 (WLRV…ATIL), 78 to 98 (LATV…LLSV), 118 to 138 (LVYI…SIGL), 140 to 160 (YLPV…TAFF), 169 to 189 (LTPI…LLAF), 204 to 224 (YVKG…LLSL), 241 to 261 (VINM…VGLF), 287 to 307 (LVWT…LIFE), 312 to 332 (FSNA…VIIF), and 336 to 356 (MNGL…SYVY). A disordered region spans residues 367 to 390 (KSNEIPTTESPDRPEAEGSSEQSK).

Belongs to the purine permeases (TC 2.A.7.14) family. As to expression, expressed in mesophyll cells.

It localises to the membrane. The sequence is that of Purine permease 21 from Arabidopsis thaliana (Mouse-ear cress).